Reading from the N-terminus, the 411-residue chain is Gamma-glutamyl phosphate reductase (411 aa).

The protein belongs to the gamma-glutamyl phosphate reductase family.

Its subcellular location is the cytoplasm. It catalyses the reaction L-glutamate 5-semialdehyde + phosphate + NADP(+) = L-glutamyl 5-phosphate + NADPH + H(+). The protein operates within amino-acid biosynthesis; L-proline biosynthesis; L-glutamate 5-semialdehyde from L-glutamate: step 2/2. In terms of biological role, catalyzes the NADPH-dependent reduction of L-glutamate 5-phosphate into L-glutamate 5-semialdehyde and phosphate. The product spontaneously undergoes cyclization to form 1-pyrroline-5-carboxylate. In Nautilia profundicola (strain ATCC BAA-1463 / DSM 18972 / AmH), this protein is Gamma-glutamyl phosphate reductase.